A 486-amino-acid chain; its full sequence is Glutamyl-tRNA(Gln) amidotransferase subunit A (486 aa).

Residues Lys75 and Ser150 each act as charge relay system in the active site. Residue Ser174 is the Acyl-ester intermediate of the active site.

It belongs to the amidase family. GatA subfamily. In terms of assembly, heterotrimer of A, B and C subunits.

It carries out the reaction L-glutamyl-tRNA(Gln) + L-glutamine + ATP + H2O = L-glutaminyl-tRNA(Gln) + L-glutamate + ADP + phosphate + H(+). Its function is as follows. Allows the formation of correctly charged Gln-tRNA(Gln) through the transamidation of misacylated Glu-tRNA(Gln) in organisms which lack glutaminyl-tRNA synthetase. The reaction takes place in the presence of glutamine and ATP through an activated gamma-phospho-Glu-tRNA(Gln). The chain is Glutamyl-tRNA(Gln) amidotransferase subunit A from Nostoc punctiforme (strain ATCC 29133 / PCC 73102).